A 336-amino-acid chain; its full sequence is tRNA N6-adenosine threonylcarbamoyltransferase (336 aa).

The Fe cation site is built by histidine 111 and histidine 115. Substrate-binding positions include 134-138 (VVSGG), aspartate 167, glycine 180, aspartate 184, and asparagine 272. Aspartate 300 contacts Fe cation.

It belongs to the KAE1 / TsaD family. Fe(2+) is required as a cofactor.

The protein resides in the cytoplasm. The enzyme catalyses L-threonylcarbamoyladenylate + adenosine(37) in tRNA = N(6)-L-threonylcarbamoyladenosine(37) in tRNA + AMP + H(+). Its function is as follows. Required for the formation of a threonylcarbamoyl group on adenosine at position 37 (t(6)A37) in tRNAs that read codons beginning with adenine. Is involved in the transfer of the threonylcarbamoyl moiety of threonylcarbamoyl-AMP (TC-AMP) to the N6 group of A37, together with TsaE and TsaB. TsaD likely plays a direct catalytic role in this reaction. This is tRNA N6-adenosine threonylcarbamoyltransferase from Caldicellulosiruptor saccharolyticus (strain ATCC 43494 / DSM 8903 / Tp8T 6331).